We begin with the raw amino-acid sequence, 326 residues long: Vitamin B12 import system permease protein BtuC (326 aa).

The next 9 helical transmembrane spans lie at 15-35 (WLLC…CAGE), 61-81 (LAVL…QALF), 88-108 (PGLL…VLLG), 112-132 (LPNW…TLIL), 146-166 (LLAG…AIYF), 184-204 (GGVD…LLWI), 240-260 (GWMV…GLVI), 274-294 (VLLP…DIVA), and 302-322 (ELPI…WLLL).

The protein belongs to the binding-protein-dependent transport system permease family. FecCD subfamily. The complex is composed of two ATP-binding proteins (BtuD), two transmembrane proteins (BtuC) and a solute-binding protein (BtuF).

Its subcellular location is the cell inner membrane. In terms of biological role, part of the ABC transporter complex BtuCDF involved in vitamin B12 import. Involved in the translocation of the substrate across the membrane. The chain is Vitamin B12 import system permease protein BtuC from Escherichia coli O9:H4 (strain HS).